Reading from the N-terminus, the 1434-residue chain is Gag-Pol polyprotein (1434 aa).

Gly2 carries the N-myristoyl glycine; by host lipid modification. The interval 7 to 31 (VLSGGKLDAWEKIRLRPGGKKKYRL) is interaction with Gp41. The segment at 8 to 43 (LSGGKLDAWEKIRLRPGGKKKYRLKHIVWASRELKR) is interaction with host CALM1. The interaction with host AP3D1 stretch occupies residues 12-19 (KLDAWEKI). Positions 14 to 33 (DAWEKIRLRPGGKKKYRLKH) are interaction with membrane phosphatidylinositol 4,5-bisphosphate and RNA. Residues 16–22 (WEKIRLR) carry the Nuclear export signal motif. Residues 26-32 (KKKYRLK) carry the Nuclear localization signal motif. The interaction with membrane phosphatidylinositol 4,5-bisphosphate stretch occupies residues 73-77 (EELKS). Basic and acidic residues predominate over residues 103–112 (KLQEEQDKHQ). Residues 103-124 (KLQEEQDKHQQKTQQATADKGV) form a disordered region. Tyr132 bears the Phosphotyrosine; by host mark. The interval 189-227 (NTVGGHQAAMQMLKDTINEEAAEWDRLHPVHAGPIPPGQ) is interaction with human PPIA/CYPA and NUP153. Residues 277–363 (YSPVSILDIK…GGPSHKARIL (87 aa)) are dimerization/Multimerization of capsid protein p24. 2 CCHC-type zinc fingers span residues 389-406 (VKCF…NCRA) and 410-427 (RGCW…DCTE). The tract at residues 443-483 (EARKFSSEQTRANSPASRELRVRGGDSSLPEAGAERQGTGS) is disordered. Residues 449–458 (SEQTRANSPA) show a composition bias toward polar residues. The dimerization of protease stretch occupies residues 488–492 (PQITL). One can recognise a Peptidase A2 domain in the interval 507 to 576 (REALLDTGAD…TPVNIIGRNM (70 aa)). The active-site For protease activity; shared with dimeric partner is Asp512. 2 dimerization of protease regions span residues 536–542 (GIGGFIK) and 575–587 (NMLT…LNFP). One can recognise a Reverse transcriptase domain in the interval 630–820 (EGKISKIGPE…PPFLWMGYEL (191 aa)). Positions 696, 771, and 772 each coordinate Mg(2+). The RT 'primer grip' stretch occupies residues 813–821 (FLWMGYELH). The Tryptophan repeat motif motif lies at 984-1000 (WEIWWTEYWQATWIPEW). Residues 1020–1143 (IIGAETFYVD…VDKLVSTGIR (124 aa)) enclose the RNase H type-1 domain. Asp1029, Glu1064, Asp1084, and Asp1135 together coordinate Mg(2+). The segment at 1149–1190 (DGIDKAQEEHEKYHSNWRAMASDFNLPPVVAKEIVASCDKCQ) adopts an Integrase-type zinc-finger fold. Zn(2+)-binding residues include His1158, His1162, Cys1186, and Cys1189. The 151-residue stretch at 1200-1350 (VDCSPGIWQL…SAGERIIDII (151 aa)) folds into the Integrase catalytic domain. Mg(2+) is bound by residues Asp1210, Asp1262, and Glu1298. Residues 1369–1416 (FRVYFRDSRDPVWKGPAKLLWKGEGAVVIQDNNEIKVIPRRKAKIIRD) constitute a DNA-binding region (integrase-type).

Homotrimer; further assembles as hexamers of trimers. Interacts with gp41 (via C-terminus). Interacts with host CALM1; this interaction induces a conformational change in the Matrix protein, triggering exposure of the myristate group. Interacts with host AP3D1; this interaction allows the polyprotein trafficking to multivesicular bodies during virus assembly. Part of the pre-integration complex (PIC) which is composed of viral genome, matrix protein, Vpr and integrase. As to quaternary structure, homodimer; the homodimer further multimerizes as homohexamers or homopentamers. Interacts with human PPIA/CYPA; This interaction stabilizes the capsid. Interacts with human NUP153. Interacts with host PDZD8; this interaction stabilizes the capsid. Interacts with monkey TRIM5; this interaction destabilizes the capsid. In terms of assembly, homodimer, whose active site consists of two apposed aspartic acid residues. Heterodimer of p66 RT and p51 RT (RT p66/p51). Heterodimerization of RT is essential for DNA polymerase activity. The overall folding of the subdomains is similar in p66 RT and p51 RT but the spatial arrangements of the subdomains are dramatically different. As to quaternary structure, homotetramer; may further associate as a homohexadecamer. Part of the pre-integration complex (PIC) which is composed of viral genome, matrix protein, Vpr and integrase. Interacts with human SMARCB1/INI1 and human PSIP1/LEDGF isoform 1. Interacts with human KPNA3; this interaction might play a role in nuclear import of the pre-integration complex. Interacts with human NUP153; this interaction might play a role in nuclear import of the pre-integration complex. Mg(2+) is required as a cofactor. In terms of processing, specific enzymatic cleavages by the viral protease yield mature proteins. The protease is released by autocatalytic cleavage. The polyprotein is cleaved during and after budding, this process is termed maturation. Proteolytic cleavage of p66 RT removes the RNase H domain to yield the p51 RT subunit. Nucleocapsid protein p7 might be further cleaved after virus entry. Post-translationally, tyrosine phosphorylated presumably in the virion by a host kinase. Phosphorylation is apparently not a major regulator of membrane association. Phosphorylated possibly by host MAPK1; this phosphorylation is necessary for Pin1-mediated virion uncoating. In terms of processing, methylated by host PRMT6, impairing its function by reducing RNA annealing and the initiation of reverse transcription.

The protein localises to the host cell membrane. It localises to the host endosome. The protein resides in the host multivesicular body. It is found in the virion membrane. Its subcellular location is the host nucleus. The protein localises to the host cytoplasm. It localises to the virion. The catalysed reaction is Specific for a P1 residue that is hydrophobic, and P1' variable, but often Pro.. The enzyme catalyses Endohydrolysis of RNA in RNA/DNA hybrids. Three different cleavage modes: 1. sequence-specific internal cleavage of RNA. Human immunodeficiency virus type 1 and Moloney murine leukemia virus enzymes prefer to cleave the RNA strand one nucleotide away from the RNA-DNA junction. 2. RNA 5'-end directed cleavage 13-19 nucleotides from the RNA end. 3. DNA 3'-end directed cleavage 15-20 nucleotides away from the primer terminus.. It carries out the reaction 3'-end directed exonucleolytic cleavage of viral RNA-DNA hybrid.. It catalyses the reaction DNA(n) + a 2'-deoxyribonucleoside 5'-triphosphate = DNA(n+1) + diphosphate. With respect to regulation, protease: The viral protease is inhibited by many synthetic protease inhibitors (PIs), such as amprenavir, atazanavir, indinavir, loprinavir, nelfinavir, ritonavir and saquinavir. Use of protease inhibitors in tritherapy regimens permit more ambitious therapeutic strategies. Reverse transcriptase/ribonuclease H: RT can be inhibited either by nucleoside RT inhibitors (NRTIs) or by non nucleoside RT inhibitors (NNRTIs). NRTIs act as chain terminators, whereas NNRTIs inhibit DNA polymerization by binding a small hydrophobic pocket near the RT active site and inducing an allosteric change in this region. Classical NRTIs are abacavir, adefovir (PMEA), didanosine (ddI), lamivudine (3TC), stavudine (d4T), tenofovir (PMPA), zalcitabine (ddC), and zidovudine (AZT). Classical NNRTIs are atevirdine (BHAP U-87201E), delavirdine, efavirenz (DMP-266), emivirine (I-EBU), and nevirapine (BI-RG-587). The tritherapies used as a basic effective treatment of AIDS associate two NRTIs and one NNRTI. In terms of biological role, mediates, with Gag polyprotein, the essential events in virion assembly, including binding the plasma membrane, making the protein-protein interactions necessary to create spherical particles, recruiting the viral Env proteins, and packaging the genomic RNA via direct interactions with the RNA packaging sequence (Psi). Gag-Pol polyprotein may regulate its own translation, by the binding genomic RNA in the 5'-UTR. At low concentration, the polyprotein would promote translation, whereas at high concentration, the polyprotein would encapsidate genomic RNA and then shut off translation. Functionally, targets the polyprotein to the plasma membrane via a multipartite membrane-binding signal, that includes its myristoylated N-terminus. Matrix protein is part of the pre-integration complex. Implicated in the release from host cell mediated by Vpu. Binds to RNA. Its function is as follows. Forms the conical core that encapsulates the genomic RNA-nucleocapsid complex in the virion. Most core are conical, with only 7% tubular. The core is constituted by capsid protein hexamer subunits. The core is disassembled soon after virion entry. Host restriction factors such as TRIM5-alpha or TRIMCyp bind retroviral capsids and cause premature capsid disassembly, leading to blocks in reverse transcription. Capsid restriction by TRIM5 is one of the factors which restricts HIV-1 to the human species. Host PIN1 apparently facilitates the virion uncoating. On the other hand, interactions with PDZD8 or CYPA stabilize the capsid. Encapsulates and protects viral dimeric unspliced genomic RNA (gRNA). Binds these RNAs through its zinc fingers. Acts as a nucleic acid chaperone which is involved in rearangement of nucleic acid secondary structure during gRNA retrotranscription. Also facilitates template switch leading to recombination. As part of the polyprotein, participates in gRNA dimerization, packaging, tRNA incorporation and virion assembly. In terms of biological role, aspartyl protease that mediates proteolytic cleavages of Gag and Gag-Pol polyproteins during or shortly after the release of the virion from the plasma membrane. Cleavages take place as an ordered, step-wise cascade to yield mature proteins. This process is called maturation. Displays maximal activity during the budding process just prior to particle release from the cell. Also cleaves Nef and Vif, probably concomitantly with viral structural proteins on maturation of virus particles. Hydrolyzes host EIF4GI and PABP1 in order to shut off the capped cellular mRNA translation. The resulting inhibition of cellular protein synthesis serves to ensure maximal viral gene expression and to evade host immune response. Also mediates cleavage of host YTHDF3. Mediates cleavage of host CARD8, thereby activating the CARD8 inflammasome, leading to the clearance of latent HIV-1 in patient CD4(+) T-cells after viral reactivation; in contrast, HIV-1 can evade CARD8-sensing when its protease remains inactive in infected cells prior to viral budding. Functionally, multifunctional enzyme that converts the viral RNA genome into dsDNA in the cytoplasm, shortly after virus entry into the cell. This enzyme displays a DNA polymerase activity that can copy either DNA or RNA templates, and a ribonuclease H (RNase H) activity that cleaves the RNA strand of RNA-DNA heteroduplexes in a partially processive 3' to 5' endonucleasic mode. Conversion of viral genomic RNA into dsDNA requires many steps. A tRNA(3)-Lys binds to the primer-binding site (PBS) situated at the 5'-end of the viral RNA. RT uses the 3' end of the tRNA primer to perform a short round of RNA-dependent minus-strand DNA synthesis. The reading proceeds through the U5 region and ends after the repeated (R) region which is present at both ends of viral RNA. The portion of the RNA-DNA heteroduplex is digested by the RNase H, resulting in a ssDNA product attached to the tRNA primer. This ssDNA/tRNA hybridizes with the identical R region situated at the 3' end of viral RNA. This template exchange, known as minus-strand DNA strong stop transfer, can be either intra- or intermolecular. RT uses the 3' end of this newly synthesized short ssDNA to perform the RNA-dependent minus-strand DNA synthesis of the whole template. RNase H digests the RNA template except for two polypurine tracts (PPTs) situated at the 5'-end and near the center of the genome. It is not clear if both polymerase and RNase H activities are simultaneous. RNase H probably can proceed both in a polymerase-dependent (RNA cut into small fragments by the same RT performing DNA synthesis) and a polymerase-independent mode (cleavage of remaining RNA fragments by free RTs). Secondly, RT performs DNA-directed plus-strand DNA synthesis using the PPTs that have not been removed by RNase H as primers. PPTs and tRNA primers are then removed by RNase H. The 3' and 5' ssDNA PBS regions hybridize to form a circular dsDNA intermediate. Strand displacement synthesis by RT to the PBS and PPT ends produces a blunt ended, linear dsDNA copy of the viral genome that includes long terminal repeats (LTRs) at both ends. Its function is as follows. Catalyzes viral DNA integration into the host chromosome, by performing a series of DNA cutting and joining reactions. This enzyme activity takes place after virion entry into a cell and reverse transcription of the RNA genome in dsDNA. The first step in the integration process is 3' processing. This step requires a complex comprising the viral genome, matrix protein, Vpr and integrase. This complex is called the pre-integration complex (PIC). The integrase protein removes 2 nucleotides from each 3' end of the viral DNA, leaving recessed CA OH's at the 3' ends. In the second step, the PIC enters cell nucleus. This process is mediated through integrase and Vpr proteins, and allows the virus to infect a non dividing cell. This ability to enter the nucleus is specific of lentiviruses, other retroviruses cannot and rely on cell division to access cell chromosomes. In the third step, termed strand transfer, the integrase protein joins the previously processed 3' ends to the 5' ends of strands of target cellular DNA at the site of integration. The 5'-ends are produced by integrase-catalyzed staggered cuts, 5 bp apart. A Y-shaped, gapped, recombination intermediate results, with the 5'-ends of the viral DNA strands and the 3' ends of target DNA strands remaining unjoined, flanking a gap of 5 bp. The last step is viral DNA integration into host chromosome. This involves host DNA repair synthesis in which the 5 bp gaps between the unjoined strands are filled in and then ligated. Since this process occurs at both cuts flanking the HIV genome, a 5 bp duplication of host DNA is produced at the ends of HIV-1 integration. Alternatively, Integrase may catalyze the excision of viral DNA just after strand transfer, this is termed disintegration. This chain is Gag-Pol polyprotein (gag-pol), found in Homo sapiens (Human).